The following is a 324-amino-acid chain: Serine/threonine-protein phosphatase PP1 isozyme 8 (324 aa).

Residues Asp66, His68, Asp94, and Asn126 each contribute to the Mn(2+) site. The active-site Proton donor is the His127. 2 residues coordinate Mn(2+): His175 and His250.

It belongs to the PPP phosphatase family. PP-1 subfamily. The cofactor is Mn(2+). As to expression, expressed in roots, rosettes and flowers.

It is found in the nucleus. The protein resides in the cytoplasm. The catalysed reaction is O-phospho-L-seryl-[protein] + H2O = L-seryl-[protein] + phosphate. The enzyme catalyses O-phospho-L-threonyl-[protein] + H2O = L-threonyl-[protein] + phosphate. Phosphatase activity is strongly reduced by the protein phosphatase inhibitor 2 (I-2). Its function is as follows. Serine/threonine-protein phosphatase that possesses phosphatase activity toward para-nitrophenyl phosphate (pNPP) in vitro. This chain is Serine/threonine-protein phosphatase PP1 isozyme 8, found in Arabidopsis thaliana (Mouse-ear cress).